A 465-amino-acid chain; its full sequence is Ribulose bisphosphate carboxylase large chain (465 aa).

Lysine 4 bears the N6,N6,N6-trimethyllysine mark. Residues asparagine 113 and threonine 163 each coordinate substrate. Lysine 165 serves as the catalytic Proton acceptor. Lysine 167 serves as a coordination point for substrate. Lysine 191, aspartate 193, and glutamate 194 together coordinate Mg(2+). The residue at position 191 (lysine 191) is an N6-carboxylysine. Histidine 284 (proton acceptor) is an active-site residue. Substrate contacts are provided by arginine 285, histidine 317, and serine 369.

It belongs to the RuBisCO large chain family. Type I subfamily. As to quaternary structure, heterohexadecamer of 8 large chains and 8 small chains; disulfide-linked. The disulfide link is formed within the large subunit homodimers. Mg(2+) is required as a cofactor. In terms of processing, the disulfide bond which can form in the large chain dimeric partners within the hexadecamer appears to be associated with oxidative stress and protein turnover.

Its subcellular location is the plastid. It is found in the chloroplast. It carries out the reaction 2 (2R)-3-phosphoglycerate + 2 H(+) = D-ribulose 1,5-bisphosphate + CO2 + H2O. It catalyses the reaction D-ribulose 1,5-bisphosphate + O2 = 2-phosphoglycolate + (2R)-3-phosphoglycerate + 2 H(+). Its function is as follows. RuBisCO catalyzes two reactions: the carboxylation of D-ribulose 1,5-bisphosphate, the primary event in carbon dioxide fixation, as well as the oxidative fragmentation of the pentose substrate in the photorespiration process. Both reactions occur simultaneously and in competition at the same active site. This is Ribulose bisphosphate carboxylase large chain from Eucommia ulmoides (Hardy rubber tree).